The chain runs to 631 residues: Transforming acidic coiled-coil-containing protein 3 (631 aa).

An N-acetylserine modification is found at Ser-2. Position 39 is a phosphoserine (Ser-39). A compositionally biased stretch (polar residues) spans 42–59; the sequence is ENVPPQSQAKATNVTFQT. A disordered region spans residues 42-70; it reads ENVPPQSQAKATNVTFQTPPRDPQTHRIL. Ser-71 carries the phosphoserine modification. 2 necessary but not sufficient for spindle localization regions span residues 311 to 366 and 384 to 631; these read EESF…PMPV and KPTE…MEKI. Ser-347 carries the post-translational modification Phosphoserine; by AURKA. Residues 363 to 385 form a disordered region; the sequence is PMPVAPITNSTQDTEEESGSGKP. The stretch at 431 to 630 forms a coiled coil; sequence QKDLDAVVNV…CDDLISKMEK (200 aa).

It belongs to the TACC family. Interacts with GCN5L2 and PCAF. The coiled coil C-terminal region interacts with AH receptor nuclear translocator protein (ARNT) and ARNT2. Interacts with CCDC100/CEP120. Interacts with CKAP5 independently of clathrin. Interacts with CKAP5 and clathrin forming the TACC3/ch-TOG/clathrin complex located at spindle inter-microtubules bridges; TACC3 (phosphorylated at Ser-347 by AURKA) and CLTC are proposed to form a composite microtubule interaction surface. As to expression, embryonically expressed.

It localises to the cytoplasm. The protein localises to the cytoskeleton. The protein resides in the microtubule organizing center. It is found in the centrosome. Its subcellular location is the spindle pole. In terms of biological role, plays a role in the microtubule-dependent coupling of the nucleus and the centrosome. Involved in the processes that regulate centrosome-mediated interkinetic nuclear migration (INM) of neural progenitors. Acts as a component of the TACC3/ch-TOG/clathrin complex proposed to contribute to stabilization of kinetochore fibers of the mitotic spindle by acting as inter-microtubule bridge. The TACC3/ch-TOG/clathrin complex is required for the maintenance of kinetochore fiber tension. May be involved in the control of cell growth and differentiation. May have a role in embryonic development. The sequence is that of Transforming acidic coiled-coil-containing protein 3 (Tacc3) from Mus musculus (Mouse).